Consider the following 393-residue polypeptide: 2,3,4,5-tetrahydropyridine-2,6-dicarboxylate N-succinyltransferase (393 aa).

Glutamate 261 (acyl-anhydride intermediate) is an active-site residue. Succinyl-CoA is bound by residues arginine 263, glycine 278, serine 281, alanine 304, 319-320, glycine 327, lysine 356, and 369-372; these read DA and RQDS.

Belongs to the type 2 tetrahydrodipicolinate N-succinyltransferase family. As to quaternary structure, homotrimer.

The protein resides in the cytoplasm. The enzyme catalyses (S)-2,3,4,5-tetrahydrodipicolinate + succinyl-CoA + H2O = (S)-2-succinylamino-6-oxoheptanedioate + CoA. It participates in amino-acid biosynthesis; L-lysine biosynthesis via DAP pathway; LL-2,6-diaminopimelate from (S)-tetrahydrodipicolinate (succinylase route): step 1/3. Functionally, catalyzes the conversion of the cyclic tetrahydrodipicolinate (THDP) into the acyclic N-succinyl-L-2-amino-6-oxopimelate using succinyl-CoA. The protein is 2,3,4,5-tetrahydropyridine-2,6-dicarboxylate N-succinyltransferase of Nitratiruptor sp. (strain SB155-2).